Here is a 325-residue protein sequence, read N- to C-terminus: MKKHTHHKAYGDSTGKEPLIDLQSIKLWLNSFGNQGHSSEAVLNVLFTLGVILFVIYQVASLLHRMNKRVEKQLESRTKQRKVEVADKHVGDEMVFTDLHENVIRERMIPYRMPVINDDITLRNSQIFYEEMKMRRSCRQFSSRDVPLKVIQNLLKTAGTSPSVGNLQPWTFCVVSSDSIKTMIRKILEADERDNYVSRKKGASWVVDVSQLQDTWRRPYITDAPYLLIVCHEIFRDVHSKTERVFHYNQISTSIAVGILLAAIQNVGLSTVVTSPLNAGPDISRILRRPENESILLLLPLGYASEDVLVPDLKRKPVEHITKLY.

A helical transmembrane segment spans residues 42–62 (VLNVLFTLGVILFVIYQVASL). The Cytoplasmic segment spans residues 63-325 (LHRMNKRVEK…KPVEHITKLY (263 aa)). FMN is bound by residues 135-139 (RRSCR), 163-164 (SV), 273-275 (VTS), and arginine 315.

The protein belongs to the nitroreductase family. FMN serves as cofactor. As to expression, expressed in body-wall, anal depressor and vulval muscles.

Its subcellular location is the membrane. May contribute to coordination of muscle contraction as regulatory subunit of the nonessential sup-9 potassium channel complex. May act downstream of sup-10. The chain is Iodotyrosine dehalogenase 1 homolog from Caenorhabditis elegans.